A 266-amino-acid polypeptide reads, in one-letter code: Protein STAY-GREEN homolog, chloroplastic (266 aa).

Residues 1-50 (MGTLTASLVAPSKLNPEKHSSLFVYKTRRKSHKNQSIVPVARLFGPAIFE) constitute a chloroplast transit peptide.

It belongs to the staygreen family.

It is found in the plastid. The protein resides in the chloroplast. Its function is as follows. Required to trigger chlorophyll degradation during leaf senescence and fruit ripening. This chain is Protein STAY-GREEN homolog, chloroplastic, found in Capsicum annuum (Capsicum pepper).